The chain runs to 449 residues: MESRGKHRLKKNGESKENLGEHEQARIGFHRNGDSADSLSSPVAEPNFSSPGGRSSNSILHCPPQSPEQGNNLDCLVGEELQFLWPRLQCLQHTLSNLPLSEGLKPLMNFETVEDLAALAGKGLLQELKHDYEILCKSLNSAAPLLSPEGNCESLNYSLQPLIAIVYGPTGSGKSQLLRNLLSCHLIDPSPETVFFVVPQIDMIPPQEMSAWNAQLVEGNYTCGPQQTIVPKSGTLKPRLITLTYDDLTADHNYDVTHPQNIFAQAAQRGPICIIVDECMEELGKHKSIAKFFHAFPSKLHDRFPQCTGYSVFVVLHNMNPRKDQAGNIATLKIQSKCHIISPKMQPSQVARFINTYTKAMPTAITLLLKDIFHHNANHINYDWIIYNTSPEHECMQWMYLHPQNGLMPMYLNVQTILYQLLEKIDKVLRQRQRWNTAYSKKCDKLANK.

A compositionally biased stretch (basic residues) spans 1–10 (MESRGKHRLK). The tract at residues 1 to 64 (MESRGKHRLK…SSNSILHCPP (64 aa)) is disordered. The segment covering 11–25 (KNGESKENLGEHEQA) has biased composition (basic and acidic residues). Residues 35-59 (SADSLSSPVAEPNFSSPGGRSSNSI) are compositionally biased toward polar residues. 168–175 (GPTGSGKS) is an ATP binding site. The DNA-binding stretch occupies residues 437 to 449 (TAYSKKCDKLANK).

It belongs to the adenoviridae packaging protein 1 family. Homodimer. Part of a genome packaging complex composed of packaging proteins 1, 2 and 3; this complex specifically binds to the packaging sequence on the left end of viral genomic DNA and performs packaging of the viral genome. Interacts with protein 33K.

Its subcellular location is the virion. The protein resides in the host nucleus. It is found in the host nucleoplasm. The protein localises to the host nucleolus. Functionally, component of the packaging machinery which encapsidates the viral DNA into preformed capsids and transcriptional activator of the viral major late promoter (MLP). Binds, along with packaging proteins 2 and 3, to the specific packaging sequence on the left end of viral genomic DNA and displays ATPase activity thereby providing the power stroke of the packaging machinery. The activity of packaging protein IVa2 is stimulated by protein 33K which acts as a terminase. May be the protein that pumps DNA into the capsid powered by ATP hydrolysis. Specifically binds to the 5'-CG-3' nucleotides of the repeats making up the packaging sequence. Component of the DEF-A and DEF-B transcription factors that bind downstream elements of the major late promoter (MLP), and stimulate transcription from the MLP after initiation of viral DNA replication. DEF-A is a heterodimer packaging proteins 1 and 2 and DEF-B is a homodimer of packaging protein 1. The polypeptide is Packaging protein 1 (Mus musculus (Mouse)).